A 230-amino-acid chain; its full sequence is Thymidylate kinase (230 aa).

20–27 lines the ATP pocket; that stretch reads GGEGSGKS.

Belongs to the thymidylate kinase family.

It catalyses the reaction dTMP + ATP = dTDP + ADP. Phosphorylation of dTMP to form dTDP in both de novo and salvage pathways of dTTP synthesis. The protein is Thymidylate kinase of Nitrobacter winogradskyi (strain ATCC 25391 / DSM 10237 / CIP 104748 / NCIMB 11846 / Nb-255).